The following is a 407-amino-acid chain: Phosphopentomutase (407 aa).

Residues aspartate 10, aspartate 306, histidine 311, aspartate 347, histidine 348, and histidine 359 each contribute to the Mn(2+) site.

It belongs to the phosphopentomutase family. Mn(2+) is required as a cofactor.

It is found in the cytoplasm. The catalysed reaction is 2-deoxy-alpha-D-ribose 1-phosphate = 2-deoxy-D-ribose 5-phosphate. The enzyme catalyses alpha-D-ribose 1-phosphate = D-ribose 5-phosphate. The protein operates within carbohydrate degradation; 2-deoxy-D-ribose 1-phosphate degradation; D-glyceraldehyde 3-phosphate and acetaldehyde from 2-deoxy-alpha-D-ribose 1-phosphate: step 1/2. Isomerase that catalyzes the conversion of deoxy-ribose 1-phosphate (dRib-1-P) and ribose 1-phosphate (Rib-1-P) to deoxy-ribose 5-phosphate (dRib-5-P) and ribose 5-phosphate (Rib-5-P), respectively. This chain is Phosphopentomutase, found in Serratia proteamaculans (strain 568).